Consider the following 193-residue polypeptide: Potassium-transporting ATPase KdpC subunit (193 aa).

A helical transmembrane segment spans residues 14–34 (ITFTFLVLCGLVYPLIVTGIA).

It belongs to the KdpC family. As to quaternary structure, the system is composed of three essential subunits: KdpA, KdpB and KdpC.

It localises to the cell membrane. Its function is as follows. Part of the high-affinity ATP-driven potassium transport (or Kdp) system, which catalyzes the hydrolysis of ATP coupled with the electrogenic transport of potassium into the cytoplasm. This subunit acts as a catalytic chaperone that increases the ATP-binding affinity of the ATP-hydrolyzing subunit KdpB by the formation of a transient KdpB/KdpC/ATP ternary complex. The sequence is that of Potassium-transporting ATPase KdpC subunit from Bacillus cereus (strain ATCC 14579 / DSM 31 / CCUG 7414 / JCM 2152 / NBRC 15305 / NCIMB 9373 / NCTC 2599 / NRRL B-3711).